A 686-amino-acid chain; its full sequence is Delta-like protein 4 (686 aa).

The N-terminal stretch at 1 to 27 (MTPGSRSACRWALLLLAVLWPQQRAAG) is a signal peptide. The Extracellular segment spans residues 28–530 (SGIFQLRLQE…PVGLPPSFPW (503 aa)). Cystine bridges form between C51–C55 and C62–C75. N-linked (GlcNAc...) asparagine glycans are attached at residues N79, N109, and N162. In terms of domain architecture, DSL spans 174–218 (VVCSDNYYGDSCSRLCKKRDDHFGHYECQPDGSLSCLPGWTGKYC). C176 and C185 form a disulfide bridge. Interaction with Notch1 stretches follow at residues 186–188 (SRL) and 192–196 (RDDHF). Intrachain disulfides connect C189/C201, C209/C218, C223/C234, C227/C240, C242/C251, C254/C265, C260/C271, C273/C282, C289/C301, C295/C311, C313/C322, C329/C340, C334/C349, C351/C360, C367/C378, C372/C389, C391/C400, C407/C418, C412/C427, C429/C438, C445/C456, C450/C465, C467/C476, C485/C496, C490/C507, and C509/C518. EGF-like domains lie at 219–252 (DQPI…PLCN), 256–283 (PHNG…LFCD), 285–323 (DLNY…EHCE), 325–361 (ELSK…QHCE), 363–401 (STLT…SNCE), 403–439 (KVDR…THCE), 441–477 (HISD…RRCE), and 481–519 (TNDA…SRCE). A helical transmembrane segment spans residues 531–551 (VAVSLGVGLVVLLVLLVMVAV). At 552–686 (AVRQLRLRRP…RNECVIATEV (135 aa)) the chain is on the cytoplasmic side.

In terms of assembly, interacts with NOTCH4. Interacts (via N-terminal DSL and MNNL domains) with NOTCH1 (via EGF-like domains).

The protein localises to the cell membrane. In terms of biological role, involved in the Notch signaling pathway as Notch ligand. Activates NOTCH1 and NOTCH4. Involved in angiogenesis; negatively regulates endothelial cell proliferation and migration and angiogenic sprouting. Essential for retinal progenitor proliferation. Required for suppressing rod fates in late retinal progenitors as well as for proper generation of other retinal cell types. During spinal cord neurogenesis, inhibits V2a interneuron fate. In Rattus norvegicus (Rat), this protein is Delta-like protein 4.